A 355-amino-acid chain; its full sequence is UDP-3-O-acylglucosamine N-acyltransferase (355 aa).

Catalysis depends on His248, which acts as the Proton acceptor.

The protein belongs to the transferase hexapeptide repeat family. LpxD subfamily. As to quaternary structure, homotrimer.

The enzyme catalyses a UDP-3-O-[(3R)-3-hydroxyacyl]-alpha-D-glucosamine + a (3R)-hydroxyacyl-[ACP] = a UDP-2-N,3-O-bis[(3R)-3-hydroxyacyl]-alpha-D-glucosamine + holo-[ACP] + H(+). The protein operates within bacterial outer membrane biogenesis; LPS lipid A biosynthesis. Functionally, catalyzes the N-acylation of UDP-3-O-acylglucosamine using 3-hydroxyacyl-ACP as the acyl donor. Is involved in the biosynthesis of lipid A, a phosphorylated glycolipid that anchors the lipopolysaccharide to the outer membrane of the cell. The sequence is that of UDP-3-O-acylglucosamine N-acyltransferase from Synechococcus elongatus (strain ATCC 33912 / PCC 7942 / FACHB-805) (Anacystis nidulans R2).